The following is a 295-amino-acid chain: Protoheme IX farnesyltransferase (295 aa).

Topologically, residues 1-9 (MSVKHFIQI) are cytoplasmic. The chain crosses the membrane as a helical span at residues 10-28 (TKPGIIFGNVLSVAGGFFL). The Periplasmic portion of the chain corresponds to 29 to 37 (ASKGHVDFA). Residues 38–56 (LFLAVVIGTSLVVASGCVF) traverse the membrane as a helical segment. The Cytoplasmic portion of the chain corresponds to 57–78 (NNCIDRDIDHKMERTKNRVMVQ). Residues 79 to 97 (GGMSLPLALIYATLLGVAG) form a helical membrane-spanning segment. Residues 98–107 (FSLLYVQANP) are Periplasmic-facing. A helical membrane pass occupies residues 108–126 (LSAFCALIGFIVYVGFYSL). The Cytoplasmic portion of the chain corresponds to 127-197 (WLKRKSVHGT…YSAANIPVLP (71 aa)). A helical membrane pass occupies residues 198–216 (VARGILAAKKQIVLYVLAF). At 217–228 (VLATLMLTLGGY) the chain is on the periplasmic side. Residues 229–247 (AGLGYLAVAAAMGLYWLYM) traverse the membrane as a helical segment. Residues 248–268 (AWGGYKAEDDSKWARKVFGFS) lie on the Cytoplasmic side of the membrane. Residues 269–287 (ILTVTALSVMMGVDSQTAA) form a helical membrane-spanning segment. Residues 288–295 (DVLMTYAR) lie on the Periplasmic side of the membrane.

It belongs to the UbiA prenyltransferase family. The cofactor is Mg(2+). Ca(2+) is required as a cofactor.

The protein resides in the cell inner membrane. The catalysed reaction is heme b + (2E,6E)-farnesyl diphosphate + H2O = Fe(II)-heme o + diphosphate. Converts protoheme IX and farnesyl diphosphate to heme O. This is Protoheme IX farnesyltransferase (cyoE) from Pseudomonas putida (Arthrobacter siderocapsulatus).